The following is a 186-amino-acid chain: Large ribosomal subunit protein uL22 (186 aa).

Residues 161-186 (VDDEPAKKKLSKKKLQRQKEKMLRSE) form a disordered region. Over residues 177–186 (RQKEKMLRSE) the composition is skewed to basic and acidic residues.

Belongs to the universal ribosomal protein uL22 family.

The sequence is that of Large ribosomal subunit protein uL22 (RpL17) from Drosophila pseudoobscura pseudoobscura (Fruit fly).